The primary structure comprises 441 residues: Tubulin beta-1 chain (441 aa).

Gln-11, Glu-69, Ser-138, Gly-142, Thr-143, Gly-144, Asn-204, and Asn-226 together coordinate GTP. A Mg(2+)-binding site is contributed by Glu-69.

The protein belongs to the tubulin family. In terms of assembly, dimer of alpha and beta chains. A typical microtubule is a hollow water-filled tube with an outer diameter of 25 nm and an inner diameter of 15 nM. Alpha-beta heterodimers associate head-to-tail to form protofilaments running lengthwise along the microtubule wall with the beta-tubulin subunit facing the microtubule plus end conferring a structural polarity. Microtubules usually have 13 protofilaments but different protofilament numbers can be found in some organisms and specialized cells. Mg(2+) is required as a cofactor. As to expression, expressed primarily in touch receptor neurons.

It localises to the cytoplasm. The protein resides in the cytoskeleton. TTubulin is the major constituent of microtubules, a cylinder consisting of laterally associated linear protofilaments composed of alpha- and beta-tubulin heterodimers. Microtubules grow by the addition of GTP-tubulin dimers to the microtubule end, where a stabilizing cap forms. Below the cap, tubulin dimers are in GDP-bound state, owing to GTPase activity of alpha-tubulin. Plays a role in mechanosensory transduction (touch sensitivity). Functionally, mec-7 beta-tubulin is required for the production of 15-protofilament microtubules. The protein is Tubulin beta-1 chain (mec-7) of Caenorhabditis elegans.